A 426-amino-acid chain; its full sequence is MGPLPAPSCTQRITWKGLLLTASLLNFWNPPTTAEVTIEAQPPKVSEGKDVLLLVHNLPQNLPGYFWYKGEMTDLYHYIISYIVDGKIIIYGPAYSGRETVYSNASLLIQNVTRKDAGTYTLHIIKRGDETREEIRHFTFTLYLETPKPYISSSNLNPREAMEAVRLICDPETLDASYLWWMNGQSLPVTHRLQLSKTNRTLYLFGVTKYIAGPYECEIRNPVSASRSDPVTLNLLPKLPIPYITINNLNPRENKDVLAFTCEPKSENYTYIWWLNGQSLPVSPGVKRPIENRILILPSVTRNETGPYQCEIRDRYGGLRSNPVILNVLYGPDLPRIYPSFTYYRSGENLDLSCFTESNPPAEYFWTINGKFQQSGQKLFIPQITRNHSGLYACSVHNSATGKEISKSMTVKVSGPCHGDLTESQS.

Positions Met-1–Ala-34 are cleaved as a signal peptide. The Ig-like V-type domain maps to Glu-35–Leu-144. N-linked (GlcNAc...) asparagine glycosylation is found at Asn-104 and Asn-111. The short motif at Arg-127–Asp-129 is the Cell attachment site element. Ig-like C2-type domains lie at Pro-147 to Asn-234, Pro-242 to Leu-326, and Pro-335 to Thr-410. 3 disulfides stabilise this stretch: Cys-169/Cys-217, Cys-262/Cys-310, and Cys-354/Cys-394. N-linked (GlcNAc...) asparagine glycans are attached at residues Asn-199, Asn-268, Asn-303, and Asn-387.

Belongs to the immunoglobulin superfamily. CEA family. Interacts with latency-associated peptide; leading to TGFB1 activation.

Its subcellular location is the secreted. Its function is as follows. Binds to the small latent transforming growth factor-beta complex, consisting of the N-terminal TGFB1 latency-associated peptide (LAP) and the mature form of TGFB1, thereby leading to the activation of TGFB1. The activation of TGFB1 leads to stimulation of naive CD4(+) T-cells to increase FoxP3 expression and to an increase in the number of FoxP3(+) regulatory T-cells. Induces the differentiation of a suppressive CD4(+)LAP(+)FoxP3(-) T-cell subset. Induces the secretion of TGFB1 in macrophages, but not in activated CD4(+) T-cells. May reduce the expression of several pro-inflammatory cytokines and chemokines by CD4(+) T-cells, including IL2 and IL6. The sequence is that of Pregnancy-specific beta-1-glycoprotein 9 (PSG9) from Homo sapiens (Human).